Consider the following 358-residue polypeptide: MFKMVSSPHTHSGKLTAHIMLWVILAMMPAFFTQIYYFGFGVVLQSALAIGTAIIAEFIAIKLRGKKPLNYLSDFSVALTALILAMAIPPYAPYWVIIIGTLCAVLLGKQVYGGLGQNPFNPAMIGYVILLISFPLQMTTWMPPINLLQEPPTFSDAFSLIFSGLTTDGFTLSQLTHNIDGITQATPLDSAKIFYKSHTQLSDFYELIKLPIFMGNGTDFAQGWWQINVAFLAGGIFLILKRIIHWQIPVAMLVTFFCLATATAFTGFTHLSAISQLVSGAMMFGAFFIATDPVTASITPRGKIIFGALVGLFVYLIRYHGNYPDGVAFAILLSNICVPLIDHYTRPRVSGYPTKGRK.

4 helical membrane passes run 19–39, 41–61, 79–99, and 125–145; these read IMLWVILAMMPAFFTQIYYFG, GVVLQSALAIGTAIIAEFIAI, LTALILAMAIPPYAPYWVIII, and IGYVILLISFPLQMTTWMPPI. An FMN phosphoryl threonine modification is found at T186. 5 helical membrane passes run 220-240, 248-268, 271-291, 297-317, and 321-341; these read FAQGWWQINVAFLAGGIFLIL, IPVAMLVTFFCLATATAFTGF, LSAISQLVSGAMMFGAFFIAT, SITPRGKIIFGALVGLFVYLI, and GNYPDGVAFAILLSNICVPLI.

Belongs to the NqrB/RnfD family. As to quaternary structure, the complex is composed of six subunits: RnfA, RnfB, RnfC, RnfD, RnfE and RnfG. FMN serves as cofactor.

It is found in the cell inner membrane. In terms of biological role, part of a membrane-bound complex that couples electron transfer with translocation of ions across the membrane. The chain is Ion-translocating oxidoreductase complex subunit D from Haemophilus influenzae (strain PittGG).